A 183-amino-acid polypeptide reads, in one-letter code: Large ribosomal subunit protein uL5 (183 aa).

It belongs to the universal ribosomal protein uL5 family. Part of the 50S ribosomal subunit; part of the 5S rRNA/L5/L18/L25 subcomplex. Contacts the 5S rRNA and the P site tRNA. Forms a bridge to the 30S subunit in the 70S ribosome.

This is one of the proteins that bind and probably mediate the attachment of the 5S RNA into the large ribosomal subunit, where it forms part of the central protuberance. In the 70S ribosome it contacts protein S13 of the 30S subunit (bridge B1b), connecting the 2 subunits; this bridge is implicated in subunit movement. Contacts the P site tRNA; the 5S rRNA and some of its associated proteins might help stabilize positioning of ribosome-bound tRNAs. The protein is Large ribosomal subunit protein uL5 of Chlorobaculum tepidum (strain ATCC 49652 / DSM 12025 / NBRC 103806 / TLS) (Chlorobium tepidum).